Consider the following 89-residue polypeptide: Small ribosomal subunit protein uS17 (89 aa).

This sequence belongs to the universal ribosomal protein uS17 family. Part of the 30S ribosomal subunit.

One of the primary rRNA binding proteins, it binds specifically to the 5'-end of 16S ribosomal RNA. The chain is Small ribosomal subunit protein uS17 from Phytoplasma mali (strain AT).